Reading from the N-terminus, the 1168-residue chain is DNA-directed RNA polymerase subunit beta (1168 aa).

Belongs to the RNA polymerase beta chain family. In terms of assembly, the RNAP catalytic core consists of 2 alpha, 1 beta, 1 beta' and 1 omega subunit. When a sigma factor is associated with the core the holoenzyme is formed, which can initiate transcription.

It catalyses the reaction RNA(n) + a ribonucleoside 5'-triphosphate = RNA(n+1) + diphosphate. In terms of biological role, DNA-dependent RNA polymerase catalyzes the transcription of DNA into RNA using the four ribonucleoside triphosphates as substrates. The sequence is that of DNA-directed RNA polymerase subunit beta from Corynebacterium kroppenstedtii (strain DSM 44385 / JCM 11950 / CIP 105744 / CCUG 35717).